The following is a 418-amino-acid chain: Magnesium transporter MRS2-E (418 aa).

Residues 119–146 form a disordered region; the sequence is DAAPSTNPAAADRGNGTEQGDQGSVPGL. Residues 166 to 232 are a coiled coil; that stretch reads VCLEHACKDL…RDELEHLLDD (67 aa). Basic and acidic residues predominate over residues 258 to 268; it reads DSHKYASVDHD. The segment at 258-287 is disordered; that stretch reads DSHKYASVDHDDDREEEDHDDETESGRESS. Acidic residues predominate over residues 269-280; it reads DDREEEDHDDET. The helical transmembrane segment at 344 to 364 threads the bilayer; that stretch reads GVMLTTATVVVTAGIVVVSLF. Residues 365 to 367 carry the Required for magnesium transport activity motif; the sequence is GMN. Residues 389-409 traverse the membrane as a helical segment; it reads FWETTFGTVAGCIAIYLLAIY.

It belongs to the CorA metal ion transporter (MIT) (TC 1.A.35.5) family.

Its subcellular location is the membrane. In terms of biological role, magnesium transporter that may mediate the influx of magnesium. This is Magnesium transporter MRS2-E (MRS2-E) from Oryza sativa subsp. indica (Rice).